Reading from the N-terminus, the 423-residue chain is Serine--tRNA ligase (423 aa).

Residue 229–231 (TAE) coordinates L-serine. Position 260–262 (260–262 (RKE)) interacts with ATP. Glutamate 283 contributes to the L-serine binding site. 347-350 (EVSS) is an ATP binding site. Serine 383 lines the L-serine pocket.

It belongs to the class-II aminoacyl-tRNA synthetase family. Type-1 seryl-tRNA synthetase subfamily. In terms of assembly, homodimer. The tRNA molecule binds across the dimer.

The protein localises to the cytoplasm. It carries out the reaction tRNA(Ser) + L-serine + ATP = L-seryl-tRNA(Ser) + AMP + diphosphate + H(+). The catalysed reaction is tRNA(Sec) + L-serine + ATP = L-seryl-tRNA(Sec) + AMP + diphosphate + H(+). It functions in the pathway aminoacyl-tRNA biosynthesis; selenocysteinyl-tRNA(Sec) biosynthesis; L-seryl-tRNA(Sec) from L-serine and tRNA(Sec): step 1/1. Its function is as follows. Catalyzes the attachment of serine to tRNA(Ser). Is also able to aminoacylate tRNA(Sec) with serine, to form the misacylated tRNA L-seryl-tRNA(Sec), which will be further converted into selenocysteinyl-tRNA(Sec). The polypeptide is Serine--tRNA ligase (Chloroflexus aurantiacus (strain ATCC 29366 / DSM 635 / J-10-fl)).